Consider the following 111-residue polypeptide: Probable 4-amino-4-deoxy-L-arabinose-phosphoundecaprenol flippase subunit ArnE (111 aa).

A run of 3 helical transmembrane segments spans residues 36 to 56, 61 to 81, and 88 to 108; these read IVLW…LWLL, VPVG…TLAA, and PVSP…VILG. Residues 40–109 enclose the EamA domain; sequence LGLALACLGL…IIGGIVILGS (70 aa).

It belongs to the ArnE family. Heterodimer of ArnE and ArnF.

The protein resides in the cell inner membrane. Its pathway is bacterial outer membrane biogenesis; lipopolysaccharide biosynthesis. Functionally, translocates 4-amino-4-deoxy-L-arabinose-phosphoundecaprenol (alpha-L-Ara4N-phosphoundecaprenol) from the cytoplasmic to the periplasmic side of the inner membrane. This is Probable 4-amino-4-deoxy-L-arabinose-phosphoundecaprenol flippase subunit ArnE from Shigella flexneri.